We begin with the raw amino-acid sequence, 63 residues long: Chromatin protein Cren7 (63 aa).

The protein belongs to the Cren7 family. In terms of assembly, monomer. In terms of processing, methylated at multiple sites, to varying extents.

It localises to the chromosome. The protein localises to the cytoplasm. Its function is as follows. A chromatin protein, binds double-stranded DNA without sequence specificity. Constrains negative DNA supercoils. The sequence is that of Chromatin protein Cren7 from Pyrobaculum calidifontis (strain DSM 21063 / JCM 11548 / VA1).